The chain runs to 186 residues: uncharacterized protein (186 aa).

Residues 89-164 (LMSLGIGEDI…NTPLKLYSIY (76 aa)) enclose the Cupin type-2 domain. ATP is bound at residue 117–124 (GIVKMGKS).

This is an uncharacterized protein from Bacillus subtilis (strain 168).